A 62-amino-acid polypeptide reads, in one-letter code: Large ribosomal subunit protein bL28 (62 aa).

The protein belongs to the bacterial ribosomal protein bL28 family.

The sequence is that of Large ribosomal subunit protein bL28 from Koribacter versatilis (strain Ellin345).